Reading from the N-terminus, the 522-residue chain is Glutamate--cysteine ligase, chloroplastic (522 aa).

2 cysteine pairs are disulfide-bonded: Cys186/Cys406 and Cys349/Cys364.

It belongs to the carboxylate-amine ligase family. Glutamate--cysteine ligase type 2 subfamily. Homodimer or monomer when oxidized or reduced, respectively. The Cys-186-Cys-406 disulfide bridge is known to modulate the enzyme activity according to the redox status. The oxidized form constitutes the active enzyme. In terms of tissue distribution, abundant in leaves and roots. Expressed to a high level in leaf trichomes of mature plant.

It localises to the plastid. It is found in the chloroplast. The catalysed reaction is L-cysteine + L-glutamate + ATP = gamma-L-glutamyl-L-cysteine + ADP + phosphate + H(+). The protein operates within sulfur metabolism; glutathione biosynthesis; glutathione from L-cysteine and L-glutamate: step 1/2. Feedback inhibition by glutathione. Inhibited by buthionine sulfoximine and cystamine. Functionally, seems to play an important role in controlling the expression of resistance responses like the regulation of salicylic acid (SA) and phytoalexin (camalexin) production. Involved in resistance to fungal and bacterial pathogens. Required for the regulation of cell proliferation in root apical meristems through the GSH-dependent developmental pathway. Also participates in the detoxification process, the antioxidant response and is essential for embryo development and proper seed maturation. This is Glutamate--cysteine ligase, chloroplastic (GSH1) from Arabidopsis thaliana (Mouse-ear cress).